The chain runs to 201 residues: FMN reductase (NADH) RutF 1 (201 aa).

A compositionally biased stretch (low complexity) spans 167–195 (PRAPRSGSAPAEPARAARAVGARPAEGPA). Positions 167–201 (PRAPRSGSAPAEPARAARAVGARPAEGPALALRSA) are disordered.

It belongs to the non-flavoprotein flavin reductase family. RutF subfamily.

It carries out the reaction FMNH2 + NAD(+) = FMN + NADH + 2 H(+). Functionally, catalyzes the reduction of FMN to FMNH2 which is used to reduce pyrimidine by RutA via the Rut pathway. The chain is FMN reductase (NADH) RutF 1 from Methylorubrum extorquens (strain CM4 / NCIMB 13688) (Methylobacterium extorquens).